The following is a 577-amino-acid chain: MNIQALLSEKVSQALIAAGAPADCEPQVRQSAKAQFGDYQANGVMAIAKKLGMPPRQFAEQALAHLDLTGIAAKTEIAGPGFINIFLDPAFLAKNIEAAVASDRAGVEKVSAPQTIVVDYSAPNVAKEMHVGHVRSTIIGDASVRTLEFLGHKVIRANHVGDWGTQFGMLIAYLEKQQQENAGEMALSDLEGFYREAKKHYDEDEAFAERARSYVVKLQGGDEYCREMWRKLVDITMTQNQITYQRLNVTLTRDDVMGESLYNPMLPGIVADLKAKGLAVESEGATVVFLDEFKNKEGEPMGVIIQKKDGGYLYTTTDIACAKYRYETLHADRVLYYIDSRQHQHLMQAWTIVRKAGYVPESVPLEHHMFGMMLGKDGKPFKTRAGGTIKLSELLDEALDRARRLVAGKNPDMPADELEKLANAVGIGAVKYADLSKSRTTDYIFDWDNMLAFEGNTAPYMQYAYTRVLSVFRKAGVKESELTAPVVIQDDREAQLAARLLQFEETLGVVARDGTPHVMCAYLYDLAGLFSGFYEHCPILTAETDALRQSRLKLALLTAKTLKLGLDTLGIETVERM.

A 'HIGH' region motif is present at residues 123–133 (PNVAKEMHVGH).

The protein belongs to the class-I aminoacyl-tRNA synthetase family. Monomer.

The protein localises to the cytoplasm. It carries out the reaction tRNA(Arg) + L-arginine + ATP = L-arginyl-tRNA(Arg) + AMP + diphosphate. The sequence is that of Arginine--tRNA ligase from Cronobacter sakazakii (strain ATCC BAA-894) (Enterobacter sakazakii).